Consider the following 284-residue polypeptide: Bifunctional protein FolD (284 aa).

NADP(+)-binding positions include 166–168, serine 191, and isoleucine 232; that span reads GAS.

The protein belongs to the tetrahydrofolate dehydrogenase/cyclohydrolase family. As to quaternary structure, homodimer.

It carries out the reaction (6R)-5,10-methylene-5,6,7,8-tetrahydrofolate + NADP(+) = (6R)-5,10-methenyltetrahydrofolate + NADPH. The enzyme catalyses (6R)-5,10-methenyltetrahydrofolate + H2O = (6R)-10-formyltetrahydrofolate + H(+). It participates in one-carbon metabolism; tetrahydrofolate interconversion. Its function is as follows. Catalyzes the oxidation of 5,10-methylenetetrahydrofolate to 5,10-methenyltetrahydrofolate and then the hydrolysis of 5,10-methenyltetrahydrofolate to 10-formyltetrahydrofolate. The sequence is that of Bifunctional protein FolD from Neisseria meningitidis serogroup A / serotype 4A (strain DSM 15465 / Z2491).